The sequence spans 698 residues: DNA ligase (698 aa).

Residues 40-44, 89-90, and glutamate 123 each bind NAD(+); these read DGEYD and SL. Lysine 125 (N6-AMP-lysine intermediate) is an active-site residue. NAD(+) contacts are provided by arginine 146, glutamate 184, lysine 300, and lysine 324. Residues cysteine 418, cysteine 421, cysteine 436, and cysteine 442 each coordinate Zn(2+). A BRCT domain is found at 620–698; sequence AGDSPLAGKT…EAEFRAMSGG (79 aa).

This sequence belongs to the NAD-dependent DNA ligase family. LigA subfamily. Requires Mg(2+) as cofactor. Mn(2+) is required as a cofactor.

The catalysed reaction is NAD(+) + (deoxyribonucleotide)n-3'-hydroxyl + 5'-phospho-(deoxyribonucleotide)m = (deoxyribonucleotide)n+m + AMP + beta-nicotinamide D-nucleotide.. Functionally, DNA ligase that catalyzes the formation of phosphodiester linkages between 5'-phosphoryl and 3'-hydroxyl groups in double-stranded DNA using NAD as a coenzyme and as the energy source for the reaction. It is essential for DNA replication and repair of damaged DNA. The polypeptide is DNA ligase (Rhodospirillum rubrum (strain ATCC 11170 / ATH 1.1.1 / DSM 467 / LMG 4362 / NCIMB 8255 / S1)).